A 201-amino-acid polypeptide reads, in one-letter code: Small ribosomal subunit protein uS4 (201 aa).

The 64-residue stretch at 91-154 (TRLDNVVYRA…RKMEWFEEAQ (64 aa)) folds into the S4 RNA-binding domain.

This sequence belongs to the universal ribosomal protein uS4 family. Part of the 30S ribosomal subunit. Contacts protein S5. The interaction surface between S4 and S5 is involved in control of translational fidelity.

One of the primary rRNA binding proteins, it binds directly to 16S rRNA where it nucleates assembly of the body of the 30S subunit. Functionally, with S5 and S12 plays an important role in translational accuracy. The protein is Small ribosomal subunit protein uS4 of Corynebacterium ammoniagenes (Brevibacterium ammoniagenes).